The primary structure comprises 132 residues: uncharacterized protein (132 aa).

Residues Met-1 to Tyr-68 are disordered. The helical transmembrane segment at Val-100–Val-120 threads the bilayer.

Belongs to the FAM241 family.

It localises to the membrane. This is an uncharacterized protein from Homo sapiens (Human).